Reading from the N-terminus, the 186-residue chain is MTEGIDIKELKRRMDGAVSAFKSDIASLRTGRASANILDPVTIEAYGSRMPLNQVANITVPEPRMLSVSVWDKSMVSAVERGIRESNLGLNPIVDGQSLRIPLPELNEERRKSLVKVAHDYAEKSKVAIRHVRRDGMDGLKKAEKDGVIGQDEGRAQSERVQKMTDETISEIDRLLGEKEKEIMQV.

It belongs to the RRF family.

Its subcellular location is the cytoplasm. In terms of biological role, responsible for the release of ribosomes from messenger RNA at the termination of protein biosynthesis. May increase the efficiency of translation by recycling ribosomes from one round of translation to another. The sequence is that of Ribosome-recycling factor from Rhizobium leguminosarum bv. trifolii (strain WSM2304).